A 110-amino-acid chain; its full sequence is UPF0122 protein SH1678 (110 aa).

This sequence belongs to the UPF0122 family.

Its function is as follows. Might take part in the signal recognition particle (SRP) pathway. This is inferred from the conservation of its genetic proximity to ftsY/ffh. May be a regulatory protein. In Staphylococcus haemolyticus (strain JCSC1435), this protein is UPF0122 protein SH1678.